The following is a 457-amino-acid chain: Phosphoglucosamine mutase (457 aa).

Residue serine 103 is the Phosphoserine intermediate of the active site. The Mg(2+) site is built by serine 103, aspartate 244, aspartate 246, and aspartate 248. A Phosphoserine modification is found at serine 103.

This sequence belongs to the phosphohexose mutase family. Mg(2+) serves as cofactor. In terms of processing, activated by phosphorylation.

It carries out the reaction alpha-D-glucosamine 1-phosphate = D-glucosamine 6-phosphate. Catalyzes the conversion of glucosamine-6-phosphate to glucosamine-1-phosphate. The sequence is that of Phosphoglucosamine mutase from Granulibacter bethesdensis (strain ATCC BAA-1260 / CGDNIH1).